Reading from the N-terminus, the 171-residue chain is Protein phosphatase 1 regulatory subunit 1A (171 aa).

The residue at position 1 (Met1) is an N-acetylmethionine. The interval 1–171 (MEQDNSPRKI…PLDSKGANSV (171 aa)) is disordered. Residues 9-12 (KIQF) form an essential for activity region. Positions 19 to 29 (PHLDPEAAEQI) are enriched in basic and acidic residues. Position 35 is a phosphothreonine; by PKA (Thr35). The essential for activity stretch occupies residues 42–54 (TSDQSSPEIDEDR). Residues Ser43, Ser46, Ser47, and Ser67 each carry the phosphoserine modification. Basic and acidic residues predominate over residues 135 to 157 (KTAECIPKTHERGSKEPSTKEPS). Residues 143 to 171 (THERGSKEPSTKEPSTHIPPLDSKGANSV) are interaction with PPP1R15A.

This sequence belongs to the protein phosphatase inhibitor 1 family. Interacts with PPP1R15A. Post-translationally, phosphorylation of Thr-35 is required for activity.

Its function is as follows. Inhibitor of protein-phosphatase 1. This protein may be important in hormonal control of glycogen metabolism. Hormones that elevate intracellular cAMP increase I-1 activity in many tissues. I-1 activation may impose cAMP control over proteins that are not directly phosphorylated by PKA. Following a rise in intracellular calcium, I-1 is inactivated by calcineurin (or PP2B). Does not inhibit type-2 phosphatases. The sequence is that of Protein phosphatase 1 regulatory subunit 1A (PPP1R1A) from Homo sapiens (Human).